Reading from the N-terminus, the 1721-residue chain is Ras guanine nucleotide exchange factor R (1721 aa).

Residues 148–279 (QLEDEVDLVH…LQQQQQQQRS (132 aa)) adopt a coiled-coil conformation. Disordered regions lie at residues 213–232 (QQQK…KEEK), 445–515 (SSLG…NQQP), 551–701 (ATTT…VDKQ), 716–766 (RTPL…KSPS), 797–837 (TITI…TPNK), and 929–981 (DEVS…DPVS). Over residues 216–232 (KHQEEKEKNDQKEKEEK) the composition is skewed to basic and acidic residues. Composition is skewed to low complexity over residues 454-469 (SPEK…STSE), 479-493 (HNNN…STNN), 501-515 (PSLS…NQQP), and 551-581 (ATTT…LSIS). Polar residues predominate over residues 618–627 (NGTTSPRNNE). Composition is skewed to low complexity over residues 628-651 (SSVT…VNTI) and 663-686 (TPTT…SQND). Over residues 687–701 (KQNENNNKENFVDKQ) the composition is skewed to basic and acidic residues. Low complexity-rich tracts occupy residues 724–748 (SSNS…TNSS), 797–836 (TITI…TTPN), and 933–952 (ESSS…NTPS). Residues 802–831 (NNNNNNNNNNNNNNNNNNNIQQQQQQQQQI) adopt a coiled-coil conformation. Over residues 968-978 (NLSSINNSSYD) the composition is skewed to polar residues. The 121-residue stretch at 1291 to 1411 (GRYVPKAGTL…ILGGLIKKKE (121 aa)) folds into the N-terminal Ras-GEF domain. The region spanning 1447 to 1676 (NESEIARQLT…YQLSLIREPR (230 aa)) is the Ras-GEF domain.

Phosphorylated on threonine residues.

Functionally, promotes the exchange of Ras-bound GDP by GTP. May also play a role in the activation of rasG. The protein is Ras guanine nucleotide exchange factor R (gefR) of Dictyostelium discoideum (Social amoeba).